The sequence spans 203 residues: A-type ATP synthase subunit E (203 aa).

The protein belongs to the V-ATPase E subunit family. Has multiple subunits with at least A(3), B(3), C, D, E, F, H, I and proteolipid K(x).

The protein resides in the cell membrane. Its function is as follows. Component of the A-type ATP synthase that produces ATP from ADP in the presence of a proton gradient across the membrane. This chain is A-type ATP synthase subunit E, found in Desulfurococcus sp. (strain SY).